Consider the following 326-residue polypeptide: Putative HTH-type transcriptional regulatory protein MmarC5_0898 (326 aa).

One can recognise an HTH cro/C1-type domain in the interval 128–183 (LRETREKLKISVGELAEISRVSRKTIYKYEQNEANPSAEVAIKIEEYLDVPLIKGI). The segment at residues 139–158 (VGELAEISRVSRKTIYKYEQ) is a DNA-binding region (H-T-H motif).

In Methanococcus maripaludis (strain C5 / ATCC BAA-1333), this protein is Putative HTH-type transcriptional regulatory protein MmarC5_0898.